The sequence spans 344 residues: Anthranilate phosphoribosyltransferase (344 aa).

Residues Gly-80, 83 to 84 (GD), Thr-88, 90 to 93 (NIST), 108 to 116 (KHGNRSISS), and Ser-120 contribute to the 5-phospho-alpha-D-ribose 1-diphosphate site. An anthranilate-binding site is contributed by Gly-80. Ser-92 is a Mg(2+) binding site. Asn-111 contributes to the anthranilate binding site. Residue Arg-166 participates in anthranilate binding. The Mg(2+) site is built by Asp-229 and Glu-230.

It belongs to the anthranilate phosphoribosyltransferase family. As to quaternary structure, homodimer. It depends on Mg(2+) as a cofactor.

It catalyses the reaction N-(5-phospho-beta-D-ribosyl)anthranilate + diphosphate = 5-phospho-alpha-D-ribose 1-diphosphate + anthranilate. It participates in amino-acid biosynthesis; L-tryptophan biosynthesis; L-tryptophan from chorismate: step 2/5. Functionally, catalyzes the transfer of the phosphoribosyl group of 5-phosphorylribose-1-pyrophosphate (PRPP) to anthranilate to yield N-(5'-phosphoribosyl)-anthranilate (PRA). The protein is Anthranilate phosphoribosyltransferase of Chloroherpeton thalassium (strain ATCC 35110 / GB-78).